Reading from the N-terminus, the 425-residue chain is Dual-specificity RNA methyltransferase RlmN (425 aa).

Catalysis depends on glutamate 136, which acts as the Proton acceptor. The 248-residue stretch at 142–389 folds into the Radical SAM core domain; that stretch reads GDDRGTLCVS…VRTPRGRDIL (248 aa). Cysteine 149 and cysteine 392 are joined by a disulfide. Residues cysteine 156, cysteine 160, and cysteine 163 each coordinate [4Fe-4S] cluster. S-adenosyl-L-methionine contacts are provided by residues 218-219, serine 250, 272-274, and asparagine 349; these read GE and SLH. Residue cysteine 392 is the S-methylcysteine intermediate of the active site.

The protein belongs to the radical SAM superfamily. RlmN family. It depends on [4Fe-4S] cluster as a cofactor.

Its subcellular location is the cytoplasm. It carries out the reaction adenosine(2503) in 23S rRNA + 2 reduced [2Fe-2S]-[ferredoxin] + 2 S-adenosyl-L-methionine = 2-methyladenosine(2503) in 23S rRNA + 5'-deoxyadenosine + L-methionine + 2 oxidized [2Fe-2S]-[ferredoxin] + S-adenosyl-L-homocysteine. The catalysed reaction is adenosine(37) in tRNA + 2 reduced [2Fe-2S]-[ferredoxin] + 2 S-adenosyl-L-methionine = 2-methyladenosine(37) in tRNA + 5'-deoxyadenosine + L-methionine + 2 oxidized [2Fe-2S]-[ferredoxin] + S-adenosyl-L-homocysteine. Functionally, specifically methylates position 2 of adenine 2503 in 23S rRNA and position 2 of adenine 37 in tRNAs. m2A2503 modification seems to play a crucial role in the proofreading step occurring at the peptidyl transferase center and thus would serve to optimize ribosomal fidelity. This chain is Dual-specificity RNA methyltransferase RlmN, found in Methylorubrum populi (strain ATCC BAA-705 / NCIMB 13946 / BJ001) (Methylobacterium populi).